The sequence spans 499 residues: Cysteine--tRNA ligase (499 aa).

Cysteine 29 provides a ligand contact to Zn(2+). The 'HIGH' region motif lies at 31-41 (VTVYDLCHLGH). Positions 213, 238, and 242 each coordinate Zn(2+). A 'KMSKS' region motif is present at residues 270–274 (KMSKS). Position 273 (lysine 273) interacts with ATP.

Belongs to the class-I aminoacyl-tRNA synthetase family. As to quaternary structure, monomer. Requires Zn(2+) as cofactor.

It localises to the cytoplasm. The catalysed reaction is tRNA(Cys) + L-cysteine + ATP = L-cysteinyl-tRNA(Cys) + AMP + diphosphate. This chain is Cysteine--tRNA ligase, found in Synechococcus sp. (strain CC9902).